The sequence spans 838 residues: Pentatricopeptide repeat-containing protein At4g19440, chloroplastic (838 aa).

Residues 1–32 (MAALLYFPKISSQMTSSHFISFSPMDLRRLSR) constitute a chloroplast transit peptide. PPR repeat units lie at residues 238-268 (SKTT…VCKG), 272-306 (DVYL…GVAP), 307-341 (NVVT…GMEP), 342-376 (TLIT…GFPP), 377-411 (NVIV…GLSL), 412-446 (TSST…GFNV), 447-481 (NQGS…NMSP), 482-516 (GGGL…GFVV), 517-551 (DTRT…GCVM), 552-586 (DRVS…GLKP), 587-621 (DNYT…GMLP), 622-656 (DVYT…NVQP), 657-691 (NTVV…GISP), 692-726 (NSAT…GLEP), 727-761 (NVFH…NVHP), and 762-796 (NKIT…GIVP).

The protein belongs to the PPR family. P subfamily.

Its subcellular location is the plastid. The protein localises to the chloroplast. The sequence is that of Pentatricopeptide repeat-containing protein At4g19440, chloroplastic from Arabidopsis thaliana (Mouse-ear cress).